Consider the following 161-residue polypeptide: Nucleotide-binding protein Sama_2557 (161 aa).

Belongs to the YajQ family.

Functionally, nucleotide-binding protein. In Shewanella amazonensis (strain ATCC BAA-1098 / SB2B), this protein is Nucleotide-binding protein Sama_2557.